The sequence spans 277 residues: Shikimate dehydrogenase (NADP(+)) (277 aa).

Residues 18–20 (SKS) and Thr65 each bind shikimate. The active-site Proton acceptor is Lys69. NADP(+) is bound at residue Glu81. Positions 90 and 106 each coordinate shikimate. Residues 130-134 (GAGGA), 154-159 (NRTFSK), and Met217 contribute to the NADP(+) site. Tyr219 is a shikimate binding site. Residue Gly241 coordinates NADP(+).

It belongs to the shikimate dehydrogenase family. In terms of assembly, homodimer.

It catalyses the reaction shikimate + NADP(+) = 3-dehydroshikimate + NADPH + H(+). It functions in the pathway metabolic intermediate biosynthesis; chorismate biosynthesis; chorismate from D-erythrose 4-phosphate and phosphoenolpyruvate: step 4/7. In terms of biological role, involved in the biosynthesis of the chorismate, which leads to the biosynthesis of aromatic amino acids. Catalyzes the reversible NADPH linked reduction of 3-dehydroshikimate (DHSA) to yield shikimate (SA). This Vibrio parahaemolyticus serotype O3:K6 (strain RIMD 2210633) protein is Shikimate dehydrogenase (NADP(+)).